The primary structure comprises 370 residues: Anhydro-N-acetylmuramic acid kinase (370 aa).

Residue G13–D20 participates in ATP binding.

Belongs to the anhydro-N-acetylmuramic acid kinase family.

It carries out the reaction 1,6-anhydro-N-acetyl-beta-muramate + ATP + H2O = N-acetyl-D-muramate 6-phosphate + ADP + H(+). Its pathway is amino-sugar metabolism; 1,6-anhydro-N-acetylmuramate degradation. The protein operates within cell wall biogenesis; peptidoglycan recycling. In terms of biological role, catalyzes the specific phosphorylation of 1,6-anhydro-N-acetylmuramic acid (anhMurNAc) with the simultaneous cleavage of the 1,6-anhydro ring, generating MurNAc-6-P. Is required for the utilization of anhMurNAc either imported from the medium or derived from its own cell wall murein, and thus plays a role in cell wall recycling. This is Anhydro-N-acetylmuramic acid kinase from Shewanella denitrificans (strain OS217 / ATCC BAA-1090 / DSM 15013).